Consider the following 783-residue polypeptide: Outer membrane usher protein FanD (783 aa).

An N-terminal signal peptide occupies residues M1–A23. C763 and C782 form a disulfide bridge.

This sequence belongs to the fimbrial export usher family.

The protein localises to the cell outer membrane. Its function is as follows. Involved in the export and assembly of K99 fimbrial subunits across the outer membrane. This is Outer membrane usher protein FanD (fanD) from Escherichia coli.